The sequence spans 314 residues: Prohormone-3 (314 aa).

Residues 1–19 (MGRVLLSASSLLLHIQVFT) form the signal peptide. A helical transmembrane segment spans residues 90–112 (YTCVALTVVALVSTMHFGVEAWG).

It localises to the membrane. This is Prohormone-3 from Apis mellifera (Honeybee).